Reading from the N-terminus, the 342-residue chain is tRNA N6-adenosine threonylcarbamoyltransferase (342 aa).

Residues His111 and His115 each coordinate Fe cation. Residues 134–138, Asp167, Gly180, and Asn274 contribute to the substrate site; that span reads LVSGG. Asp302 contributes to the Fe cation binding site.

The protein belongs to the KAE1 / TsaD family. Fe(2+) serves as cofactor.

It localises to the cytoplasm. It catalyses the reaction L-threonylcarbamoyladenylate + adenosine(37) in tRNA = N(6)-L-threonylcarbamoyladenosine(37) in tRNA + AMP + H(+). Required for the formation of a threonylcarbamoyl group on adenosine at position 37 (t(6)A37) in tRNAs that read codons beginning with adenine. Is involved in the transfer of the threonylcarbamoyl moiety of threonylcarbamoyl-AMP (TC-AMP) to the N6 group of A37, together with TsaE and TsaB. TsaD likely plays a direct catalytic role in this reaction. The sequence is that of tRNA N6-adenosine threonylcarbamoyltransferase from Herminiimonas arsenicoxydans.